Reading from the N-terminus, the 744-residue chain is Potassium-transporting ATPase ATP-binding subunit (744 aa).

The next 4 membrane-spanning stretches (helical) occupy residues 80-100, 108-128, 265-285, and 310-330; these read PVMF…VMAL, AGFI…ANVA, LALT…TVTL, and VLVA…LSAI. Asp-363 serves as the catalytic 4-aspartylphosphate intermediate. Residues Asp-400, Glu-404, 435 to 442, and Lys-457 contribute to the ATP site; that span reads FSAQTRMS. Positions 580 and 584 each coordinate Mg(2+). 3 helical membrane passes run 650–670, 678–698, and 724–744; these read FAII…LNVM, AVMS…PLAL, and LLLP…MGWV.

The protein belongs to the cation transport ATPase (P-type) (TC 3.A.3) family. Type IA subfamily. The system is composed of three essential subunits: KdpA, KdpB and KdpC.

It is found in the cell inner membrane. It catalyses the reaction K(+)(out) + ATP + H2O = K(+)(in) + ADP + phosphate + H(+). Its function is as follows. Part of the high-affinity ATP-driven potassium transport (or Kdp) system, which catalyzes the hydrolysis of ATP coupled with the electrogenic transport of potassium into the cytoplasm. This subunit is responsible for energy coupling to the transport system and for the release of the potassium ions to the cytoplasm. The sequence is that of Potassium-transporting ATPase ATP-binding subunit from Ralstonia nicotianae (strain ATCC BAA-1114 / GMI1000) (Ralstonia solanacearum).